The primary structure comprises 425 residues: Serine--tRNA ligase (425 aa).

233-235 is a binding site for L-serine; sequence TAE. Residue 264 to 266 participates in ATP binding; sequence RRE. Glutamate 287 lines the L-serine pocket. An ATP-binding site is contributed by 351–354; that stretch reads EISS. Serine 385 serves as a coordination point for L-serine.

It belongs to the class-II aminoacyl-tRNA synthetase family. Type-1 seryl-tRNA synthetase subfamily. In terms of assembly, homodimer. The tRNA molecule binds across the dimer.

The protein resides in the cytoplasm. It catalyses the reaction tRNA(Ser) + L-serine + ATP = L-seryl-tRNA(Ser) + AMP + diphosphate + H(+). It carries out the reaction tRNA(Sec) + L-serine + ATP = L-seryl-tRNA(Sec) + AMP + diphosphate + H(+). The protein operates within aminoacyl-tRNA biosynthesis; selenocysteinyl-tRNA(Sec) biosynthesis; L-seryl-tRNA(Sec) from L-serine and tRNA(Sec): step 1/1. Its function is as follows. Catalyzes the attachment of serine to tRNA(Ser). Is also able to aminoacylate tRNA(Sec) with serine, to form the misacylated tRNA L-seryl-tRNA(Sec), which will be further converted into selenocysteinyl-tRNA(Sec). This is Serine--tRNA ligase from Prochlorococcus marinus (strain MIT 9215).